Here is a 495-residue protein sequence, read N- to C-terminus: Heterogeneous nuclear ribonucleoprotein Q (495 aa).

The span at methionine 1–arginine 10 shows a compositional bias: basic and acidic residues. The segment at methionine 1–aspartate 101 is disordered. Composition is skewed to acidic residues over residues valine 11–valine 46 and methionine 67–aspartate 101. RRM domains follow at residues serine 116–threonine 194, asparagine 196–proline 278, and lysine 292–proline 368. The disordered stretch occupies residues methionine 452–tyrosine 495. The segment covering aspartate 478–arginine 487 has biased composition (basic and acidic residues).

As to quaternary structure, interacts with LHP1 in the nucleus on a common set of chromatin regions. As to expression, predominantly expressed in vascular and meristematic tissues. Expressed throughout development in seedlings, roots, leaves, floral buds and siliques.

The protein resides in the nucleus. It localises to the cytoplasm. The protein localises to the microsome. In terms of biological role, transcriptional activator that binds DNA on GAGA-like motif and 5'-(C/G)ACGTG(G/T)C(A/G)-3' consensus motif in the promoters of target genes. Component of ribonucleosomes, which are complexes of at least 20 other different heterogeneous nuclear ribonucleoproteins (hnRNP). hnRNP play an important role in processing of precursor mRNA in the nucleus. Required during flower development and for cell fate determination. Acts both as an antagonist and as a promoter of polycomb LHP1 gene regulation activity, depending of target genes, to regulate the transcription of stress-responsive and flowering genes. May regulate histone H3 trimethylation on lysine 27 (H3K27me3). Recognizes and binds histone H3 tails methylated at 'Lys-4' (H3K4me) and acetylated at 'Lys-9' (H3K9ac), leading to epigenetic activation. When in complex with LHP1, recognizes and binds histone H3 tails methylated at 'Lys-4' (H3K4me) and 'Lys-27' (H3K27me), mostly corresponding to stress-responsive genes. May function as a suppressor of cell-autonomous immune responses involving glucosinolates, salicylic acid (SA) and jasmonic acid (JA) pathways toward pathogenic bacteria and fungi. The chain is Heterogeneous nuclear ribonucleoprotein Q from Arabidopsis thaliana (Mouse-ear cress).